The following is a 216-amino-acid chain: 2',3'-cyclic-nucleotide 3'-phosphodiesterase (216 aa).

The Proton donor/acceptor role is filled by H39. Residue T41 coordinates substrate. H153 (proton donor/acceptor) is an active-site residue. Residues S155 and Y158 each coordinate substrate.

Belongs to the 2H phosphoesterase superfamily. CPD1 family.

The protein resides in the golgi apparatus. The catalysed reaction is a nucleoside 2',3'-cyclic phosphate + H2O = a nucleoside 2'-phosphate + H(+). Its function is as follows. Involved in the metabolism of ADP-ribose 1',2'-cyclic phosphate which is produced as a consequence of tRNA splicing. The chain is 2',3'-cyclic-nucleotide 3'-phosphodiesterase (CPD1) from Yarrowia lipolytica (strain CLIB 122 / E 150) (Yeast).